The primary structure comprises 476 residues: Ribulose bisphosphate carboxylase large chain (476 aa).

A propeptide spanning residues 1 to 2 (MS) is cleaved from the precursor. Pro-3 bears the N-acetylproline mark. An N6,N6,N6-trimethyllysine modification is found at Lys-14. Residues Asn-123 and Thr-173 each coordinate substrate. The Proton acceptor role is filled by Lys-175. Lys-177 lines the substrate pocket. Positions 201, 203, and 204 each coordinate Mg(2+). Residue Lys-201 is modified to N6-carboxylysine. Catalysis depends on His-294, which acts as the Proton acceptor. Substrate contacts are provided by Arg-295, His-327, and Ser-379.

This sequence belongs to the RuBisCO large chain family. Type I subfamily. In terms of assembly, heterohexadecamer of 8 large chains and 8 small chains; disulfide-linked. The disulfide link is formed within the large subunit homodimers. Mg(2+) serves as cofactor. Post-translationally, the disulfide bond which can form in the large chain dimeric partners within the hexadecamer appears to be associated with oxidative stress and protein turnover.

Its subcellular location is the plastid. The protein localises to the chloroplast. The enzyme catalyses 2 (2R)-3-phosphoglycerate + 2 H(+) = D-ribulose 1,5-bisphosphate + CO2 + H2O. The catalysed reaction is D-ribulose 1,5-bisphosphate + O2 = 2-phosphoglycolate + (2R)-3-phosphoglycerate + 2 H(+). In terms of biological role, ruBisCO catalyzes two reactions: the carboxylation of D-ribulose 1,5-bisphosphate, the primary event in carbon dioxide fixation, as well as the oxidative fragmentation of the pentose substrate in the photorespiration process. Both reactions occur simultaneously and in competition at the same active site. This is Ribulose bisphosphate carboxylase large chain from Arenaria drummondii (Drummond sandwort).